The primary structure comprises 345 residues: Phosphoribosylformylglycinamidine cyclo-ligase (345 aa).

Belongs to the AIR synthase family.

The protein resides in the cytoplasm. It carries out the reaction 2-formamido-N(1)-(5-O-phospho-beta-D-ribosyl)acetamidine + ATP = 5-amino-1-(5-phospho-beta-D-ribosyl)imidazole + ADP + phosphate + H(+). It functions in the pathway purine metabolism; IMP biosynthesis via de novo pathway; 5-amino-1-(5-phospho-D-ribosyl)imidazole from N(2)-formyl-N(1)-(5-phospho-D-ribosyl)glycinamide: step 2/2. In Histophilus somni (strain 129Pt) (Haemophilus somnus), this protein is Phosphoribosylformylglycinamidine cyclo-ligase.